The primary structure comprises 83 residues: Small ribosomal subunit protein bS16 (83 aa).

It belongs to the bacterial ribosomal protein bS16 family.

The chain is Small ribosomal subunit protein bS16 from Shewanella amazonensis (strain ATCC BAA-1098 / SB2B).